The primary structure comprises 378 residues: Carbamoyl phosphate synthase small chain (378 aa).

A CPSase region spans residues 1 to 188 (MLPSFPPAIL…LGRGYGVQDK (188 aa)). Residues serine 50, glycine 240, and glycine 242 each contribute to the L-glutamine site. The 187-residue stretch at 192 to 378 (HVVAYDFGVK…FTAAMAERKQ (187 aa)) folds into the Glutamine amidotransferase type-1 domain. The active-site Nucleophile is cysteine 268. Residues leucine 269, glutamine 272, asparagine 310, glycine 312, and phenylalanine 313 each contribute to the L-glutamine site. Active-site residues include histidine 352 and glutamate 354.

The protein belongs to the CarA family. Composed of two chains; the small (or glutamine) chain promotes the hydrolysis of glutamine to ammonia, which is used by the large (or ammonia) chain to synthesize carbamoyl phosphate. Tetramer of heterodimers (alpha,beta)4.

It catalyses the reaction hydrogencarbonate + L-glutamine + 2 ATP + H2O = carbamoyl phosphate + L-glutamate + 2 ADP + phosphate + 2 H(+). The enzyme catalyses L-glutamine + H2O = L-glutamate + NH4(+). It participates in amino-acid biosynthesis; L-arginine biosynthesis; carbamoyl phosphate from bicarbonate: step 1/1. It functions in the pathway pyrimidine metabolism; UMP biosynthesis via de novo pathway; (S)-dihydroorotate from bicarbonate: step 1/3. In terms of biological role, small subunit of the glutamine-dependent carbamoyl phosphate synthetase (CPSase). CPSase catalyzes the formation of carbamoyl phosphate from the ammonia moiety of glutamine, carbonate, and phosphate donated by ATP, constituting the first step of 2 biosynthetic pathways, one leading to arginine and/or urea and the other to pyrimidine nucleotides. The small subunit (glutamine amidotransferase) binds and cleaves glutamine to supply the large subunit with the substrate ammonia. This Ralstonia nicotianae (strain ATCC BAA-1114 / GMI1000) (Ralstonia solanacearum) protein is Carbamoyl phosphate synthase small chain.